Reading from the N-terminus, the 211-residue chain is Protein-L-isoaspartate O-methyltransferase (211 aa).

Ser-60 is an active-site residue.

The protein belongs to the methyltransferase superfamily. L-isoaspartyl/D-aspartyl protein methyltransferase family.

It localises to the cytoplasm. It carries out the reaction [protein]-L-isoaspartate + S-adenosyl-L-methionine = [protein]-L-isoaspartate alpha-methyl ester + S-adenosyl-L-homocysteine. Catalyzes the methyl esterification of L-isoaspartyl residues in peptides and proteins that result from spontaneous decomposition of normal L-aspartyl and L-asparaginyl residues. It plays a role in the repair and/or degradation of damaged proteins. In Pseudomonas aeruginosa (strain LESB58), this protein is Protein-L-isoaspartate O-methyltransferase.